We begin with the raw amino-acid sequence, 743 residues long: Threonine synthase-like 1 (743 aa).

Lys281 bears the N6-acetyllysine mark. Lys351 bears the N6-(pyridoxal phosphate)lysine mark.

This sequence belongs to the threonine synthase family. Pyridoxal 5'-phosphate is required as a cofactor.

The polypeptide is Threonine synthase-like 1 (THNSL1) (Macaca fascicularis (Crab-eating macaque)).